The primary structure comprises 285 residues: Pantothenate synthetase (285 aa).

30–37 provides a ligand contact to ATP; that stretch reads MGYLHEGH. The Proton donor role is filled by histidine 37. (R)-pantoate is bound at residue glutamine 61. Residue glutamine 61 coordinates beta-alanine. 148-151 contributes to the ATP binding site; it reads GKKD. (R)-pantoate is bound at residue glutamine 154. ATP is bound by residues valine 177 and 185-188; that span reads LSSR.

The protein belongs to the pantothenate synthetase family. In terms of assembly, homodimer.

It is found in the cytoplasm. It catalyses the reaction (R)-pantoate + beta-alanine + ATP = (R)-pantothenate + AMP + diphosphate + H(+). The protein operates within cofactor biosynthesis; (R)-pantothenate biosynthesis; (R)-pantothenate from (R)-pantoate and beta-alanine: step 1/1. Catalyzes the condensation of pantoate with beta-alanine in an ATP-dependent reaction via a pantoyl-adenylate intermediate. The sequence is that of Pantothenate synthetase from Leptospira interrogans serogroup Icterohaemorrhagiae serovar Lai (strain 56601).